A 388-amino-acid polypeptide reads, in one-letter code: Dauer abnormal formation protein 25 (388 aa).

ANK repeat units follow at residues Ser-40–Asp-69, Thr-74–Leu-103, and Ile-107–Glu-137. Residues Cys-321, Cys-324, Cys-333, Cys-336, Cys-341, Cys-345, His-353, and Cys-357 each coordinate Zn(2+). Residues Cys-321–Cys-357 form an MYND-type zinc finger.

Expressed in many ciliated sensory neurons.

It localises to the cell projection. The protein resides in the cilium. Its function is as follows. May be involved in the trafficking and dendritic transport of signaling proteins, such as the receptor-type guanylate cyclases gcy-12 and daf-11, to the cilia. In ciliated sensory neurons, required for the calcium flux to the cytoplasm in response to onset and removal of a nitric oxide (NO) stimulus and is thereby required for the behavioral avoidance response to NO-producing organisms like P.aeruginosa. In Caenorhabditis elegans, this protein is Dauer abnormal formation protein 25 (daf-25).